We begin with the raw amino-acid sequence, 70 residues long: Putative membrane protein insertion efficiency factor (70 aa).

This sequence belongs to the UPF0161 family.

It is found in the cell membrane. Could be involved in insertion of integral membrane proteins into the membrane. In Rubrobacter xylanophilus (strain DSM 9941 / JCM 11954 / NBRC 16129 / PRD-1), this protein is Putative membrane protein insertion efficiency factor.